The chain runs to 330 residues: Delta-aminolevulinic acid dehydratase (330 aa).

Zn(2+)-binding residues include Cys-122, Cys-124, His-131, and Cys-132. The Schiff-base intermediate with substrate role is filled by Lys-199. Lys-199 carries the N6-succinyllysine modification. Arg-209 contacts 5-aminolevulinate. Ser-215 is modified (phosphoserine). 5-aminolevulinate is bound at residue Arg-221. Cys-223 is a binding site for Zn(2+). The Schiff-base intermediate with substrate role is filled by Lys-252. N6-succinyllysine is present on Lys-252. Positions 279 and 318 each coordinate 5-aminolevulinate.

It belongs to the ALAD family. In terms of assembly, homooctamer; active form. Homohexamer; low activity form. It depends on Zn(2+) as a cofactor.

Its subcellular location is the cytoplasm. The protein resides in the cytosol. It carries out the reaction 2 5-aminolevulinate = porphobilinogen + 2 H2O + H(+). It participates in porphyrin-containing compound metabolism; protoporphyrin-IX biosynthesis; coproporphyrinogen-III from 5-aminolevulinate: step 1/4. Can alternate between a fully active homooctamer and a low-activity homohexamer. A bound magnesium ion may promote the assembly of the fully active homooctamer. The magnesium-binding site is absent in the low-activity homohexamer. Inhibited by compounds that favor the hexameric state. Inhibited by divalent lead ions. The lead ions partially displace the zinc cofactor. In terms of biological role, catalyzes an early step in the biosynthesis of tetrapyrroles. Binds two molecules of 5-aminolevulinate per subunit, each at a distinct site, and catalyzes their condensation to form porphobilinogen. This Macaca fascicularis (Crab-eating macaque) protein is Delta-aminolevulinic acid dehydratase (ALAD).